A 567-amino-acid polypeptide reads, in one-letter code: ETHYLENE INSENSITIVE 3-like 3 protein (567 aa).

The stretch at 24-44 (NVAEIDVSDEEIDADDLERRM) forms a coiled coil. Disordered stretches follow at residues 55–81 (KERQ…AQRK) and 286–393 (IQQP…RNIL). The span at 69–79 (ETPKKISDQAQ) shows a compositional bias: basic and acidic residues. A DNA-binding region spans residues 162 to 288 (SQFVLQDLQD…LNQEESLIQQ (127 aa)). A compositionally biased stretch (polar residues) spans 286–299 (IQQPSSDNGNSNVT). Basic and acidic residues predominate over residues 300-312 (ETHRRGNNADRRK). Positions 363–372 (KHRRRKRPRI) are enriched in basic residues.

Belongs to the EIN3 family. As to quaternary structure, interacts with MYB72.

The protein localises to the nucleus. Its function is as follows. Probable transcription factor that may be involved in the ethylene response pathway. The polypeptide is ETHYLENE INSENSITIVE 3-like 3 protein (EIL3) (Arabidopsis thaliana (Mouse-ear cress)).